Consider the following 362-residue polypeptide: Chorismate synthase (362 aa).

R46 lines the NADP(+) pocket. Residues 122–124, 238–239, G278, 293–297, and R319 each bind FMN; these read RSS, NA, and KPTPS.

The protein belongs to the chorismate synthase family. In terms of assembly, homotetramer. It depends on FMNH2 as a cofactor.

The enzyme catalyses 5-O-(1-carboxyvinyl)-3-phosphoshikimate = chorismate + phosphate. The protein operates within metabolic intermediate biosynthesis; chorismate biosynthesis; chorismate from D-erythrose 4-phosphate and phosphoenolpyruvate: step 7/7. Functionally, catalyzes the anti-1,4-elimination of the C-3 phosphate and the C-6 proR hydrogen from 5-enolpyruvylshikimate-3-phosphate (EPSP) to yield chorismate, which is the branch point compound that serves as the starting substrate for the three terminal pathways of aromatic amino acid biosynthesis. This reaction introduces a second double bond into the aromatic ring system. The polypeptide is Chorismate synthase (Campylobacter jejuni subsp. jejuni serotype O:23/36 (strain 81-176)).